Here is a 1972-residue protein sequence, read N- to C-terminus: TP53-binding protein 1 (1972 aa).

Disordered stretches follow at residues 24 to 273 (DSQP…VAAM), 290 to 332 (QIQK…CSLA), and 346 to 507 (GQRS…LGLS). Phosphoserine is present on residues Ser25 and Ser63. The span at 82–91 (EHLKENKVAD) shows a compositional bias: basic and acidic residues. Positions 94–121 (DSSNLDTCGSISQVIEQLPQPNRTSSVL) are enriched in polar residues. Ser105 and Ser124 each carry phosphoserine. Residues 138–149 (ELEQKEKEKEED) show a composition bias toward basic and acidic residues. Residues 151–168 (SGNTTHSLGAEDTASSQL) are compositionally biased toward polar residues. Phosphoserine is present on residues Ser166, Ser176, and Ser178. Residues 195-205 (LQSVTTNSGYT) show a composition bias toward polar residues. Lys217 participates in a covalent cross-link: Glycyl lysine isopeptide (Lys-Gly) (interchain with G-Cter in SUMO1); alternate. Lys217 is covalently cross-linked (Glycyl lysine isopeptide (Lys-Gly) (interchain with G-Cter in SUMO2); alternate). Phosphoserine is present on residues Ser222, Ser265, and Ser294. Composition is skewed to polar residues over residues 300–322 (LSTQ…CSTP) and 346–361 (GQRS…NSSD). Phosphothreonine is present on Thr302. 7 positions are modified to phosphoserine: Ser366, Ser380, Ser395, Ser398, Ser429, Ser452, and Ser464. Polar residues predominate over residues 426–441 (STVSPQASTPISQSTP). Over residues 442-452 (VFPPGSLPIPS) the composition is skewed to pro residues. Residues 481–490 (HSSSLTVECS) are compositionally biased toward polar residues. The segment covering 491-501 (KTSEIEPKNSP) has biased composition (basic and acidic residues). Phosphoserine occurs at positions 500, 507, 518, 523, and 525. Polar residues predominate over residues 520–531 (SEYSQSPKMESL). The segment at 520–556 (SEYSQSPKMESLSSHRIDEDGENTQIEDTEPMSPVLN) is disordered. Residues 538-549 (EDGENTQIEDTE) are compositionally biased toward acidic residues. Thr543 and Thr548 each carry phosphothreonine. Residues Ser552, Ser566, and Ser580 each carry the phosphoserine modification. Positions 568-595 (LMNPAQDGEVQLSQNDDKTKGDDTDTRD) are disordered. The segment covering 582–595 (NDDKTKGDDTDTRD) has biased composition (basic and acidic residues). A phosphoserine mark is found at Ser630, Ser635, Ser639, and Ser640. Positions 649-687 (EIKEHHPEEGSSGSEVEEIPETPCESQGEELKEENMESV) are disordered. Residue Thr670 is modified to Phosphothreonine. 8 positions are modified to phosphoserine: Ser692, Ser724, Ser727, Ser771, Ser809, Ser830, Ser831, and Ser834. The disordered stretch occupies residues 742-911 (EQEAWEEATS…TPFHFTLPKE (170 aa)). Positions 798 to 816 (AENRLDTKEEKSVEYEGDL) are enriched in basic and acidic residues. A compositionally biased stretch (basic and acidic residues) spans 839-848 (RADDPLRLDQ). Over residues 849–864 (ELQQPQTQEKTSNSLT) the composition is skewed to polar residues. At Thr855 the chain carries Phosphothreonine. Lys868 is covalently cross-linked (Glycyl lysine isopeptide (Lys-Gly) (interchain with G-Cter in SUMO1); alternate). Lys868 is covalently cross-linked (Glycyl lysine isopeptide (Lys-Gly) (interchain with G-Cter in SUMO2); alternate). The segment covering 890–902 (HASQSFCESSSET) has biased composition (polar residues). Thr922 carries the phosphothreonine modification. Residue Lys930 forms a Glycyl lysine isopeptide (Lys-Gly) (interchain with G-Cter in SUMO2) linkage. Phosphoserine is present on residues Ser970 and Ser975. A Glycyl lysine isopeptide (Lys-Gly) (interchain with G-Cter in SUMO2) cross-link involves residue Lys984. 2 disordered regions span residues 997–1028 (EASE…SVAS) and 1045–1103 (ENEA…VSPA). Residues 1018–1028 (GSTAVAESVAS) are compositionally biased toward polar residues. Ser1028 bears the Phosphoserine mark. Thr1056 carries the post-translational modification Phosphothreonine. At Ser1068 the chain carries Phosphoserine. A compositionally biased stretch (basic and acidic residues) spans 1071 to 1083 (EEEKEKLEGDHTI). A phosphoserine mark is found at Ser1086, Ser1094, Ser1101, and Ser1114. The span at 1127 to 1139 (DQKEGRSTNKENP) shows a compositional bias: basic and acidic residues. Disordered regions lie at residues 1127 to 1148 (DQKE…ERPS), 1188 to 1232 (NFGK…QPPH), and 1269 to 1478 (VTEE…DGLD). The residue at position 1148 (Ser1148) is a Phosphoserine. Over residues 1188 to 1200 (NFGKQDATVQTER) the composition is skewed to polar residues. The residue at position 1214 (Thr1214) is a Phosphothreonine. Ser1216 and Ser1219 each carry phosphoserine. Positions 1272 to 1285 (ETEEPIVECQECET) are enriched in acidic residues. 2 stretches are compositionally biased toward low complexity: residues 1298–1307 (DLGDISSFSS) and 1316–1329 (SSGT…SSGS). Residues Ser1317 and Ser1342 each carry the phosphoserine modification. At Arg1355 the chain carries Omega-N-methylarginine. Residue Ser1362 is modified to Phosphoserine. Residue Lys1365 forms a Glycyl lysine isopeptide (Lys-Gly) (interchain with G-Cter in SUMO2) linkage. Phosphoserine is present on Ser1368. The residue at position 1372 (Thr1372) is a Phosphothreonine. The short motif at 1396–1403 (RGRGRRGR) is the GAR element. 2 positions are modified to phosphoserine: Ser1426 and Ser1430. A Glycyl lysine isopeptide (Lys-Gly) (interchain with G-Cter in SUMO1); alternate cross-link involves residue Lys1434. Lys1434 is covalently cross-linked (Glycyl lysine isopeptide (Lys-Gly) (interchain with G-Cter in SUMO2); alternate). Phosphoserine is present on residues Ser1460, Ser1462, and Ser1474. The interval 1484–1603 (NSFVGLRVVA…NRLREQYGLG (120 aa)) is tudor-like. Positions 1495 to 1523 (WSSNGYFYSGKITRDVGAGKYKLLFDDGY) are interaction with dimethylated histone H4. Residue Lys1563 forms a Glycyl lysine isopeptide (Lys-Gly) (interchain with G-Cter in SUMO1); alternate linkage. Residue Lys1563 forms a Glycyl lysine isopeptide (Lys-Gly) (interchain with G-Cter in SUMO2); alternate linkage. A UDR motif is present at residues 1604–1631 (PYEAVTPLTKAADISLDNLVEGKRKRRS). Phosphothreonine is present on Thr1609. Phosphoserine occurs at positions 1618, 1631, and 1635. Disordered regions lie at residues 1622-1719 (LVEG…EEQR) and 1745-1768 (LASR…FLEI). The span at 1634–1650 (SSPATPTASSSSSTTPT) shows a compositional bias: low complexity. 2 positions are modified to phosphothreonine: Thr1638 and Thr1648. A phosphoserine mark is found at Ser1656, Ser1673, and Ser1678. Lys1685 is covalently cross-linked (Glycyl lysine isopeptide (Lys-Gly) (interchain with G-Cter in ubiquitin)). Residues Ser1701, Ser1759, and Ser1778 each carry the phosphoserine modification. 2 BRCT domains span residues 1724–1848 (LNKT…NYLL) and 1864–1964 (PREN…QHPK).

In terms of assembly, homoligomer. Interacts with p53/TP53 (via the central domain). Interacts with DCLRE1C. Interacts with histone H2AX and this requires phosphorylation of H2AX on 'Ser-139'. Interacts with histone H4 that has been dimethylated at 'Lys-20' (H4K20me2). Has low affinity for histone H4 containing monomethylated 'Lys-20' (H4K20me1). Does not bind histone H4 containing unmethylated or trimethylated 'Lys-20' (H4K20me3). Has low affinity for histone H3 that has been dimethylated on 'Lys-79'. Has very low affinity for histone H3 that has been monomethylated on 'Lys-79' (in vitro). Does not bind unmethylated histone H3. Interacts with histone H2A monoubiquitinated at 'Lys-15' (H2AK15Ub). Interacts with PWWP3A/EXPAND1. Interacts with CHEK2; modulates CHEK2 phosphorylation at 'Thr-68' in response to infrared. Interacts with MSL1; this interaction may be required for MSL1 DNA repair activity, but not for histone acetyltransferase activity. Interacts (when phosphorylated by ATM) with RIF1. Interacts (via the Tudor-like domain) with NUDT16L1/TIRR; interaction masks the Tudor-like domain and prevents recruitment to chromatin. Interacts with PAXIP1. Interacts with SHLD2. Interacts (when phosphorylated) with TOPBP1. Interacts with GFI1; promoting methylation by PRMT1. Interacts with (phosphorylated) DYNLL1; specifically binds DYNLL1 phosphorylated at 'Ser-88' and promotes its recruitment to double stand breaks (DSBs). (Microbial infection) Interacts (via C-terminus) with Epstein-Barr virus lytic switch protein BZLF1 (via C-terminus); this interaction is involved in the activation of the viral lytic cycle. Asymmetrically dimethylated on Arg residues by PRMT1. Methylation is required for DNA binding. Post-translationally, phosphorylated at basal level in the absence of DNA damage. Phosphorylated by ATM in response to DNA damage: phosphorylation at different sites promotes interaction with different set of proteins: phosphorylation at the N-terminus by ATM (residues from 6-178) promotes interaction with PAXIP1 and non-homologous end joining (NHEJ) of dysfunctional telomeres. Phosphorylation by ATM at residues that are located more C-terminus (residues 300-650) leads to promote interaction with RIF1. Interaction with RIF1 leads to disrupt interaction with NUDT16L1/TIRR. Phosphorylation at Thr-1609 and Ser-1618 in the UDR motif blocks interaction with H2AK15ub. Dephosphorylated by PPP4C. Hyperphosphorylation during mitosis correlates with its exclusion from chromatin and DNA lesions. Hyperphosphorylated in an ATR-dependent manner in response to DNA damage induced by UV irradiation. Dephosphorylated by PPP5C. Phosphorylation at Ser-366 and Thr-670 promotes interaction with TOPBP1. Phosphorylated by VRK1. In terms of processing, monoubiquitinated at Lys-1685 by MSL2 is reponse to DNA damage, leading to its stabilization.

It is found in the nucleus. Its subcellular location is the chromosome. The protein resides in the centromere. It localises to the kinetochore. Functionally, double-strand break (DSB) repair protein involved in response to DNA damage, telomere dynamics and class-switch recombination (CSR) during antibody genesis. Plays a key role in the repair of double-strand DNA breaks (DSBs) in response to DNA damage by promoting non-homologous end joining (NHEJ)-mediated repair of DSBs and specifically counteracting the function of the homologous recombination (HR) repair protein BRCA1. In response to DSBs, phosphorylation by ATM promotes interaction with RIF1 and dissociation from NUDT16L1/TIRR, leading to recruitment to DSBs sites. Recruited to DSBs sites by recognizing and binding histone H2A monoubiquitinated at 'Lys-15' (H2AK15Ub) and histone H4 dimethylated at 'Lys-20' (H4K20me2), two histone marks that are present at DSBs sites. Required for immunoglobulin class-switch recombination (CSR) during antibody genesis, a process that involves the generation of DNA DSBs. Participates in the repair and the orientation of the broken DNA ends during CSR. In contrast, it is not required for classic NHEJ and V(D)J recombination. Promotes NHEJ of dysfunctional telomeres via interaction with PAXIP1. The protein is TP53-binding protein 1 of Homo sapiens (Human).